The chain runs to 216 residues: Octanoyltransferase (216 aa).

Residues 34–209 (ENTIDEIWLV…KMNQQLDYSH (176 aa)) enclose the BPL/LPL catalytic domain. Substrate contacts are provided by residues 73–80 (RGGQITFH), 140–142 (SLG), and 153–155 (GLA). The active-site Acyl-thioester intermediate is the Cys-171.

Belongs to the LipB family.

It is found in the cytoplasm. The catalysed reaction is octanoyl-[ACP] + L-lysyl-[protein] = N(6)-octanoyl-L-lysyl-[protein] + holo-[ACP] + H(+). Its pathway is protein modification; protein lipoylation via endogenous pathway; protein N(6)-(lipoyl)lysine from octanoyl-[acyl-carrier-protein]: step 1/2. Its function is as follows. Catalyzes the transfer of endogenously produced octanoic acid from octanoyl-acyl-carrier-protein onto the lipoyl domains of lipoate-dependent enzymes. Lipoyl-ACP can also act as a substrate although octanoyl-ACP is likely to be the physiological substrate. This chain is Octanoyltransferase, found in Psychromonas ingrahamii (strain DSM 17664 / CCUG 51855 / 37).